Reading from the N-terminus, the 825-residue chain is IQ and AAA domain-containing protein 1-like (825 aa).

The 30-residue stretch at Arg206–Glu235 folds into the IQ domain. The segment covering Gln344–Lys366 has biased composition (basic and acidic residues). Disordered stretches follow at residues Gln344–Lys378 and Asp459–Thr487. Over residues Lys467–Lys482 the composition is skewed to basic residues. An ATP-binding site is contributed by Gly572 to Lys579.

The protein belongs to the AAA ATPase family.

The sequence is that of IQ and AAA domain-containing protein 1-like (Iqca1l) from Mus musculus (Mouse).